The sequence spans 33 residues: MATLDFTTKPLALVIYMSVVLLLMVGVPLLFSS.

Residues 11-31 (LALVIYMSVVLLLMVGVPLLF) traverse the membrane as a helical segment.

The protein localises to the membrane. This is an uncharacterized protein from Saccharomyces cerevisiae (strain ATCC 204508 / S288c) (Baker's yeast).